Consider the following 228-residue polypeptide: UPF0173 metal-dependent hydrolase RBAM_026340 (228 aa).

This sequence belongs to the UPF0173 family.

In Bacillus velezensis (strain DSM 23117 / BGSC 10A6 / LMG 26770 / FZB42) (Bacillus amyloliquefaciens subsp. plantarum), this protein is UPF0173 metal-dependent hydrolase RBAM_026340.